An 828-amino-acid polypeptide reads, in one-letter code: Leucine--tRNA ligase (828 aa).

The short motif at 36–46 (PYPSGKIHIGH) is the 'HIGH' region element. The 'KMSKS' region motif lies at 595–599 (KMSKS). Lysine 598 serves as a coordination point for ATP.

The protein belongs to the class-I aminoacyl-tRNA synthetase family.

The protein resides in the cytoplasm. The enzyme catalyses tRNA(Leu) + L-leucine + ATP = L-leucyl-tRNA(Leu) + AMP + diphosphate. The sequence is that of Leucine--tRNA ligase from Rickettsia prowazekii (strain Madrid E).